The chain runs to 462 residues: Argininosuccinate lyase (462 aa).

It belongs to the lyase 1 family. Argininosuccinate lyase subfamily.

The protein localises to the cytoplasm. It catalyses the reaction 2-(N(omega)-L-arginino)succinate = fumarate + L-arginine. The protein operates within amino-acid biosynthesis; L-arginine biosynthesis; L-arginine from L-ornithine and carbamoyl phosphate: step 3/3. The polypeptide is Argininosuccinate lyase (Dechloromonas aromatica (strain RCB)).